The sequence spans 354 residues: ATP-dependent (S)-NAD(P)H-hydrate dehydratase (354 aa).

A YjeF C-terminal domain is found at 42 to 350; that stretch reads AENILRAITP…ECLGRSLEDI (309 aa). (6S)-NADPHX-binding positions include glycine 155 and 208–214; that span reads NVNEYKR. Residues 248–252 and 267–276 each bind ATP; these read KGKSD and GSPRRCGGQG. Position 277 (aspartate 277) interacts with (6S)-NADPHX.

This sequence belongs to the NnrD/CARKD family. Mg(2+) serves as cofactor.

It catalyses the reaction (6S)-NADHX + ATP = ADP + phosphate + NADH + H(+). The catalysed reaction is (6S)-NADPHX + ATP = ADP + phosphate + NADPH + H(+). Functionally, catalyzes the dehydration of the S-form of NAD(P)HX at the expense of ATP, which is converted to ADP. Together with NAD(P)HX epimerase, which catalyzes the epimerization of the S- and R-forms, the enzyme allows the repair of both epimers of NAD(P)HX, a damaged form of NAD(P)H that is a result of enzymatic or heat-dependent hydration. This is ATP-dependent (S)-NAD(P)H-hydrate dehydratase from Vitis vinifera (Grape).